The chain runs to 163 residues: Cyclic pyranopterin monophosphate synthase (163 aa).

Substrate is bound by residues 76–78 (LCH) and 114–115 (ME). Aspartate 129 is a catalytic residue.

This sequence belongs to the MoaC family. Homohexamer; trimer of dimers.

The enzyme catalyses (8S)-3',8-cyclo-7,8-dihydroguanosine 5'-triphosphate = cyclic pyranopterin phosphate + diphosphate. It participates in cofactor biosynthesis; molybdopterin biosynthesis. Functionally, catalyzes the conversion of (8S)-3',8-cyclo-7,8-dihydroguanosine 5'-triphosphate to cyclic pyranopterin monophosphate (cPMP). This is Cyclic pyranopterin monophosphate synthase from Desulfovibrio desulfuricans (strain ATCC 27774 / DSM 6949 / MB).